Here is a 289-residue protein sequence, read N- to C-terminus: Protoheme IX farnesyltransferase 2 (289 aa).

9 helical membrane-spanning segments follow: residues 13 to 33 (LEITILIDIVAIAAFLAVPGS), 37 to 57 (IYDLLILIFAGTLASMSASIF), 86 to 106 (LFFIIATAMVLLSFVTSFILL), 109 to 129 (VTSAFILGGFASYVLLYTIIL), 137 to 157 (IVIGGIAGSFPALAGWASITG), 159 to 179 (VSATSLFIAFLVFMWTPTHFW), 207 to 227 (EFWIMVNTSILVIYSILPLFI), 232 to 252 (VGLLYMPMAAVMDALLIYYVA), and 267 to 287 (AFHFSNMYMLMLLIGIMLILV).

It belongs to the UbiA prenyltransferase family. Protoheme IX farnesyltransferase subfamily.

It localises to the cell membrane. It catalyses the reaction heme b + (2E,6E)-farnesyl diphosphate + H2O = Fe(II)-heme o + diphosphate. Its pathway is porphyrin-containing compound metabolism; heme O biosynthesis; heme O from protoheme: step 1/1. Converts heme B (protoheme IX) to heme O by substitution of the vinyl group on carbon 2 of heme B porphyrin ring with a hydroxyethyl farnesyl side group. In Picrophilus torridus (strain ATCC 700027 / DSM 9790 / JCM 10055 / NBRC 100828 / KAW 2/3), this protein is Protoheme IX farnesyltransferase 2.